Consider the following 421-residue polypeptide: Peptide chain release factor subunit 1 (421 aa).

It belongs to the eukaryotic release factor 1 family. Heterodimer of two subunits, one of which binds GTP.

The protein localises to the cytoplasm. Its function is as follows. Directs the termination of nascent peptide synthesis (translation) in response to the termination codons UAA, UAG and UGA. This chain is Peptide chain release factor subunit 1 (prf1), found in Methanocaldococcus jannaschii (strain ATCC 43067 / DSM 2661 / JAL-1 / JCM 10045 / NBRC 100440) (Methanococcus jannaschii).